Consider the following 236-residue polypeptide: 2-C-methyl-D-erythritol 4-phosphate cytidylyltransferase (236 aa).

Belongs to the IspD/TarI cytidylyltransferase family. IspD subfamily.

The enzyme catalyses 2-C-methyl-D-erythritol 4-phosphate + CTP + H(+) = 4-CDP-2-C-methyl-D-erythritol + diphosphate. The protein operates within isoprenoid biosynthesis; isopentenyl diphosphate biosynthesis via DXP pathway; isopentenyl diphosphate from 1-deoxy-D-xylulose 5-phosphate: step 2/6. In terms of biological role, catalyzes the formation of 4-diphosphocytidyl-2-C-methyl-D-erythritol from CTP and 2-C-methyl-D-erythritol 4-phosphate (MEP). The sequence is that of 2-C-methyl-D-erythritol 4-phosphate cytidylyltransferase from Burkholderia multivorans (strain ATCC 17616 / 249).